Here is a 117-residue protein sequence, read N- to C-terminus: UPF0295 protein GK0479 (117 aa).

The next 2 membrane-spanning stretches (helical) occupy residues 12-32 and 42-62; these read IRTFALSLIFIGVIVMYLGLF and LFMLFGMLFLVASGIVYFWIG.

This sequence belongs to the UPF0295 family.

It is found in the cell membrane. This is UPF0295 protein GK0479 from Geobacillus kaustophilus (strain HTA426).